The primary structure comprises 316 residues: Chorismate mutase 3, chloroplastic (316 aa).

A chloroplast-targeting transit peptide spans 1-47; that stretch reads MEAKLLKPAFYNSPNLNLTNSSRLISRLSIWNDKSKVGLSSGSLFLR. Residue Arg62 coordinates L-phenylalanine. One can recognise a Chorismate mutase domain in the interval 62 to 316; sequence RVDESEYLKL…QIEYLLRRLD (255 aa). L-tyrosine contacts are provided by residues Arg133 and 194 to 197; that span reads NCGS. 194-197 contacts L-phenylalanine; the sequence is NCGS.

As to quaternary structure, homodimer. In terms of tissue distribution, expressed in roots, stems, cauline leaves, flowers and siliques, and at lower levels in rosette leaves.

It localises to the plastid. The protein localises to the chloroplast. It carries out the reaction chorismate = prephenate. Its pathway is metabolic intermediate biosynthesis; prephenate biosynthesis; prephenate from chorismate: step 1/1. Allosterically inhibited by tyrosine and phenylalanine. According to another report, seems not to be repressed by tyrosine and phenylalanine. Activated by tryptophan, cysteine and histidine. In terms of biological role, may play a role in chloroplast biogenesis. This Arabidopsis thaliana (Mouse-ear cress) protein is Chorismate mutase 3, chloroplastic.